A 351-amino-acid polypeptide reads, in one-letter code: Glycerol-1-phosphate dehydrogenase [NAD(P)+] (351 aa).

NAD(+) contacts are provided by residues 98 to 102 (GSIID) and 120 to 123 (TTAS). Residue Asp125 coordinates substrate. Ser129 lines the NAD(+) pocket. Position 172 (Asp172) interacts with substrate. Zn(2+) is bound by residues Asp172 and His252. His256 lines the substrate pocket. His268 is a binding site for Zn(2+).

This sequence belongs to the glycerol-1-phosphate dehydrogenase family. Zn(2+) serves as cofactor.

The protein localises to the cytoplasm. The catalysed reaction is sn-glycerol 1-phosphate + NAD(+) = dihydroxyacetone phosphate + NADH + H(+). The enzyme catalyses sn-glycerol 1-phosphate + NADP(+) = dihydroxyacetone phosphate + NADPH + H(+). It functions in the pathway membrane lipid metabolism; glycerophospholipid metabolism. Its function is as follows. Catalyzes the NAD(P)H-dependent reduction of dihydroxyacetonephosphate (DHAP or glycerone phosphate) to glycerol 1-phosphate (G1P). The G1P thus generated is used as the glycerophosphate backbone of phospholipids in the cellular membranes of Archaea. In Thermococcus kodakarensis (strain ATCC BAA-918 / JCM 12380 / KOD1) (Pyrococcus kodakaraensis (strain KOD1)), this protein is Glycerol-1-phosphate dehydrogenase [NAD(P)+].